The chain runs to 165 residues: MLGHLVGLVKVRVVRGVNLAVRDLRSSDPYVIVRMGKQKLKTRVIKKTTNPEWNDELTLSIEDPAVPVRLEVYDKDTFIDDAMGNAELDIRPLVEVVKMKIEGVADNTVVKKVVPNRQNCLAEESTIYISEGKVKQDVVLRLRDVECGEIELQLQWVDIPGSKGV.

The C2 domain occupies 1-105 (MLGHLVGLVK…VVKMKIEGVA (105 aa)). Residues Arg22, Asp23, Asp28, Asp74, Lys75, Asp76, and Asp81 each contribute to the Ca(2+) site.

Belongs to the plant CAR protein family. As to quaternary structure, binds to PYR/PYL/RCAR abscisic acid intracellular receptors in an ABA-independent manner, both at the plasma membrane and in the nucleus. Binds phospholipids in a Ca(2+)-dependent manner. Interacts with YchF1.

The protein resides in the cell membrane. Its subcellular location is the nucleus. The protein localises to the cytoplasm. It localises to the cytosol. Mediates the transient calcium-dependent interaction of PYR/PYL/RCAR abscisic acid (ABA) receptors with the plasma membrane and thus regulates ABA sensitivity. Stimulates the GTPase/ATPase activities of YchF1, and regulates its subcellular localization. Promotes tolerance towards salinity stress by limiting the accumulation of reactive oxygen species (ROS). Promotes resistance to bacterial pathogens. This Oryza sativa subsp. indica (Rice) protein is GTPase activating protein 1.